A 160-amino-acid polypeptide reads, in one-letter code: Protein-export protein SecB (160 aa).

It belongs to the SecB family. In terms of assembly, homotetramer, a dimer of dimers. One homotetramer interacts with 1 SecA dimer.

It is found in the cytoplasm. Functionally, one of the proteins required for the normal export of preproteins out of the cell cytoplasm. It is a molecular chaperone that binds to a subset of precursor proteins, maintaining them in a translocation-competent state. It also specifically binds to its receptor SecA. This Beijerinckia indica subsp. indica (strain ATCC 9039 / DSM 1715 / NCIMB 8712) protein is Protein-export protein SecB.